The sequence spans 118 residues: Ribosome-binding factor A (118 aa).

It belongs to the RbfA family. Monomer. Binds 30S ribosomal subunits, but not 50S ribosomal subunits or 70S ribosomes.

The protein resides in the cytoplasm. In terms of biological role, one of several proteins that assist in the late maturation steps of the functional core of the 30S ribosomal subunit. Associates with free 30S ribosomal subunits (but not with 30S subunits that are part of 70S ribosomes or polysomes). Required for efficient processing of 16S rRNA. May interact with the 5'-terminal helix region of 16S rRNA. The protein is Ribosome-binding factor A of Bacillus cereus (strain AH820).